Consider the following 699-residue polypeptide: DNA ligase (699 aa).

The interval 1 to 20 is disordered; the sequence is MTVQKPIESLSPAQAKREHR. NAD(+)-binding positions include 43–47, 92–93, and Glu126; these read DAEYD and SL. Lys128 (N6-AMP-lysine intermediate) is an active-site residue. NAD(+)-binding residues include Arg149, Glu185, Lys301, and Lys325. Zn(2+) is bound by residues Cys419, Cys422, Cys443, and Cys449. The 79-residue stretch at 621–699 folds into the BRCT domain; sequence AKESPVAGKT…EEDWLKLVGE (79 aa).

It belongs to the NAD-dependent DNA ligase family. LigA subfamily. It depends on Mg(2+) as a cofactor. Requires Mn(2+) as cofactor.

The catalysed reaction is NAD(+) + (deoxyribonucleotide)n-3'-hydroxyl + 5'-phospho-(deoxyribonucleotide)m = (deoxyribonucleotide)n+m + AMP + beta-nicotinamide D-nucleotide.. Its function is as follows. DNA ligase that catalyzes the formation of phosphodiester linkages between 5'-phosphoryl and 3'-hydroxyl groups in double-stranded DNA using NAD as a coenzyme and as the energy source for the reaction. It is essential for DNA replication and repair of damaged DNA. This chain is DNA ligase, found in Beijerinckia indica subsp. indica (strain ATCC 9039 / DSM 1715 / NCIMB 8712).